A 612-amino-acid polypeptide reads, in one-letter code: DNA damage checkpoint protein 1 (612 aa).

S436 is modified (phosphoserine). The disordered stretch occupies residues 576 to 612; it reads GLLNSQNDTSNHKKQDNKEMEDGLGLTQVEKPRGIFD. A compositionally biased stretch (basic and acidic residues) spans 585–596; the sequence is SNHKKQDNKEME.

This sequence belongs to the DDC1 family. In terms of assembly, component of the checkpoint clamp complex composed of DDC1, MEC3 and RAD17. The interaction with MEC3 is performed in a RAD17-dependent manner. The checkpoint clamp complex loads onto DNA in an ATP-dependent manner through its interaction with the RFC-RAD4 checkpoint clamp loader complex. Interacts with the DNA polymerase zeta subunit REV7 and DPB11. In terms of processing, phosphorylated during cell cycle S-phase and in response to DNA damage. This phosphorylation is MEC14 dependent. Also hosphorylated by CDC28.

It localises to the cytoplasm. It is found in the nucleus. Its function is as follows. Component of the checkpoint clamp complex involved in the surveillance mechanism that allows the DNA repair pathways to act to restore the integrity of the DNA prior to DNA synthesis or separation of the replicated chromosomes. Associates with sites of DNA damage and modulates the MEC1 signaling pathway and the activation of RAD53 in response to DNA damage at phase G1. The complex also physically regulates DNA polymerase zeta-dependent mutagenesis by controlling the access of polymerase zeta to damaged DNA. This is DNA damage checkpoint protein 1 (DDC1) from Saccharomyces cerevisiae (strain ATCC 204508 / S288c) (Baker's yeast).